A 688-amino-acid polypeptide reads, in one-letter code: DNA topoisomerase 1 (688 aa).

In terms of domain architecture, Toprim spans 3-113 (ENLVIVESPA…TENRVVFNEI (111 aa)). Mg(2+) is bound by residues Glu-9 and Asp-82. The Topo IA-type catalytic domain maps to 129 to 556 (EMELVDAQQA…FYSSFKQDVE (428 aa)). The interval 163 to 168 (SAGRVQ) is interaction with DNA. Tyr-298 (O-(5'-phospho-DNA)-tyrosine intermediate) is an active-site residue. A disordered region spans residues 322–349 (YGNDYTSNRKSKGQGDQDAHEAIRPSST). The span at 334-344 (GQGDQDAHEAI) shows a compositional bias: basic and acidic residues. C4-type zinc fingers lie at residues 576–602 (CEVCGSPMVIKMGRYGKFMACSNFPDC), 616–644 (CPKCKEGDVVERKSKKNRIFYGCSKYPEC), and 657–680 (CPKCEHYLVEKKQGRKSQVVCSNC).

Belongs to the type IA topoisomerase family. In terms of assembly, monomer. Requires Mg(2+) as cofactor.

The catalysed reaction is ATP-independent breakage of single-stranded DNA, followed by passage and rejoining.. Releases the supercoiling and torsional tension of DNA, which is introduced during the DNA replication and transcription, by transiently cleaving and rejoining one strand of the DNA duplex. Introduces a single-strand break via transesterification at a target site in duplex DNA. The scissile phosphodiester is attacked by the catalytic tyrosine of the enzyme, resulting in the formation of a DNA-(5'-phosphotyrosyl)-enzyme intermediate and the expulsion of a 3'-OH DNA strand. The free DNA strand then undergoes passage around the unbroken strand, thus removing DNA supercoils. Finally, in the religation step, the DNA 3'-OH attacks the covalent intermediate to expel the active-site tyrosine and restore the DNA phosphodiester backbone. The sequence is that of DNA topoisomerase 1 from Staphylococcus saprophyticus subsp. saprophyticus (strain ATCC 15305 / DSM 20229 / NCIMB 8711 / NCTC 7292 / S-41).